The primary structure comprises 495 residues: Inner membrane ALBINO3-like protein 1, chloroplastic (495 aa).

Residues 76-96 traverse the membrane as a helical segment; that stretch reads LGAIYVLADASASTAAAAVMP. At 97 to 206 the chain is on the stromal side; the sequence is TAVDSAAGAA…VLYEQAGVNP (110 aa). The helical transmembrane segment at 207–227 threads the bilayer; sequence LAGCLPTLATIPIFIGLFSSL. At 228–273 the chain is on the lumenal side; that stretch reads TNVANDGLLDTQGFYFVPSLAGPTTMAMRQSGLGTSWLWPLGPDGA. The helical transmembrane segment at 274–294 threads the bilayer; it reads PPIGWEDAAAYLTLPLLLVAV. The Stromal segment spans residues 295 to 317; the sequence is QYASSSVTSPPIDPKDENANTQR. Residues 318–338 traverse the membrane as a helical segment; that stretch reads ALLVFLPLMVGWFSLNVPAGL. Residues 339–441 lie on the Lumenal side of the membrane; the sequence is SLYYLANTVL…ASVSLSVDDS (103 aa). A helical transmembrane segment spans residues 442 to 462; it reads TAAIAGTATMAVTAGAPAAAM. The Stromal portion of the chain corresponds to 463–495; the sequence is DPSKVNRRCKRRRLTSLVQDGSTASAAVAGASA.

Belongs to the OXA1/ALB3/YidC (TC 2.A.9.2) family. Associates with the LHCII complex and with the psaE subunit of the LHCI complex.

It is found in the plastid. The protein localises to the chloroplast thylakoid membrane. Functionally, required for the insertion of some light-harvesting complexes (LHC) proteins into the chloroplast thylakoid membrane. Essential for the assembly and activity of LHC I and II. Its function is probably partly distinct from that of ALB3.2. The protein is Inner membrane ALBINO3-like protein 1, chloroplastic (ALB3.1) of Chlamydomonas reinhardtii (Chlamydomonas smithii).